A 38-amino-acid chain; its full sequence is MKVRASVKKLCRNCKIVKRDGVIRVICSAEPKHKQRQG.

It belongs to the bacterial ribosomal protein bL36 family.

This Cronobacter sakazakii (strain ATCC BAA-894) (Enterobacter sakazakii) protein is Large ribosomal subunit protein bL36A.